The following is a 325-amino-acid chain: Small ribosomal subunit protein uS2 (325 aa).

Residues 212-226 (KEEQAKAEAERERLA) show a composition bias toward basic and acidic residues. Residues 212 to 325 (KEEQAKAEAE…TEPKASTGNW (114 aa)) form a disordered region. Low complexity-rich tracts occupy residues 234–247 (QPAA…QWAD) and 261–289 (PVTT…TGSG). Residues 290–300 (FNQDDWSVPTT) are compositionally biased toward polar residues.

The protein belongs to the universal ribosomal protein uS2 family. As to quaternary structure, component of the small ribosomal subunit. Mature ribosomes consist of a small (40S) and a large (60S) subunit. The 40S subunit contains about 33 different proteins and 1 molecule of RNA (18S). The 60S subunit contains about 49 different proteins and 3 molecules of RNA (28S, 5.8S and 5S). Interacts with ribosomal protein S21.

The protein localises to the cytoplasm. Required for the assembly and/or stability of the 40S ribosomal subunit. Required for the processing of the 20S rRNA-precursor to mature 18S rRNA in a late step of the maturation of 40S ribosomal subunits. The polypeptide is Small ribosomal subunit protein uS2 (Suberites domuncula (Sponge)).